The primary structure comprises 100 residues: NADH-quinone oxidoreductase subunit K (100 aa).

Helical transmembrane passes span threonine 4–leucine 24, isoleucine 29–phenylalanine 49, and isoleucine 61–valine 81.

Belongs to the complex I subunit 4L family. As to quaternary structure, NDH-1 is composed of 14 different subunits. Subunits NuoA, H, J, K, L, M, N constitute the membrane sector of the complex.

It localises to the cell membrane. It catalyses the reaction a quinone + NADH + 5 H(+)(in) = a quinol + NAD(+) + 4 H(+)(out). In terms of biological role, NDH-1 shuttles electrons from NADH, via FMN and iron-sulfur (Fe-S) centers, to quinones in the respiratory chain. The immediate electron acceptor for the enzyme in this species is believed to be ubiquinone. Couples the redox reaction to proton translocation (for every two electrons transferred, four hydrogen ions are translocated across the cytoplasmic membrane), and thus conserves the redox energy in a proton gradient. The protein is NADH-quinone oxidoreductase subunit K of Chloroflexus aggregans (strain MD-66 / DSM 9485).